The sequence spans 445 residues: Phosphoglucosamine mutase 1 (445 aa).

The active-site Phosphoserine intermediate is the S102. 4 residues coordinate Mg(2+): S102, D241, D243, and D245. Residue S102 is modified to Phosphoserine.

The protein belongs to the phosphohexose mutase family. Mg(2+) is required as a cofactor. Activated by phosphorylation.

The enzyme catalyses alpha-D-glucosamine 1-phosphate = D-glucosamine 6-phosphate. In terms of biological role, catalyzes the conversion of glucosamine-6-phosphate to glucosamine-1-phosphate. The protein is Phosphoglucosamine mutase 1 of Shewanella sp. (strain MR-7).